Reading from the N-terminus, the 118-residue chain is uncharacterized protein (118 aa).

This is an uncharacterized protein from Aquifex aeolicus (strain VF5).